A 203-amino-acid polypeptide reads, in one-letter code: Apoptosis-associated speck-like protein containing a CARD (203 aa).

The region spanning 1-91 (MAESFKEHLQ…DDLLRNTGQS (91 aa)) is the Pyrin domain. A CARD domain is found at 112-203 (VAFSKVNFID…FLMDDLEDAE (92 aa)).

In terms of assembly, self-associates (via pyrin and CARD domains). Interacts (via pyrin domain) with caspa (via pyrin domain). Interacts with caspb; the interaction only occurs in the presence of nlrp1. Component of NLRP1 inflammasomes. Inflammasomes are supramolecular complexes that assemble in the cytosol in response to pathogens and other damage-associated signals and play critical roles in innate immunity and inflammation. The NLRP1 inflammasome is composed of the signal sensor nlrp1, and the adapter pycard (asc), which recruit effector pro-inflammatory caspases caspa and/or caspb. The interaction between nlrp1 and pycard is required for the sequential recruitment of caspa and then caspb. Within the complex caspa is preferentially recruited first and this causes the cleavage of pro-il1b into the midformed il1b. This is followed by the recruitment of caspb, which is activated and cleaves the midformed il1b resulting in il1b maturation. Interacts (via pyrin domain) with NLP3X1 (via pyrin domain). Interacts with gbp4. Expressed in the kidney, intestine and gill. Expressed at low levels in the heart.

It localises to the cytoplasm. The protein localises to the inflammasome. Functionally, functions as a key mediator in apoptosis and inflammation. Promotes caspase-mediated apoptosis. Induces proteolytic processing of caspa and caspa-dependent apoptosis. Involved in innate immune response by acting as an integral adapter in the assembly of various inflammasomes which recruit and activate caspase-1 leading to processing and secretion of pro-inflammatory cytokines. Caspase-1-dependent inflammation leads to macrophage pyroptosis, a form of cell death. The function as activating adapter in different types of inflammasomes is mediated by the pyrin and CARD domains and their homotypic interactions. Clustered PYCARD nucleates the formation of caspase-1 filaments through the interaction of their respective CARD domains, acting as a platform for of caspase-1 polymerization. Also involved in transcriptional activation of cytokines and chemokines independent of the inflammasome. In Danio rerio (Zebrafish), this protein is Apoptosis-associated speck-like protein containing a CARD (pycard).